The primary structure comprises 72 residues: Translation initiation factor IF-1 (72 aa).

An S1-like domain is found at 1-72; that stretch reads MAKEDNIEMQ…SKGRIVFRSR (72 aa).

This sequence belongs to the IF-1 family. Component of the 30S ribosomal translation pre-initiation complex which assembles on the 30S ribosome in the order IF-2 and IF-3, IF-1 and N-formylmethionyl-tRNA(fMet); mRNA recruitment can occur at any time during PIC assembly.

The protein resides in the cytoplasm. One of the essential components for the initiation of protein synthesis. Stabilizes the binding of IF-2 and IF-3 on the 30S subunit to which N-formylmethionyl-tRNA(fMet) subsequently binds. Helps modulate mRNA selection, yielding the 30S pre-initiation complex (PIC). Upon addition of the 50S ribosomal subunit IF-1, IF-2 and IF-3 are released leaving the mature 70S translation initiation complex. The protein is Translation initiation factor IF-1 of Klebsiella pneumoniae subsp. pneumoniae (strain ATCC 700721 / MGH 78578).